The sequence spans 677 residues: Zinc finger protein 526 (677 aa).

3 consecutive C2H2-type zinc fingers follow at residues F57–H79, F109–H131, and Y141–H164. A disordered region spans residues T167 to P190. The segment covering P172–P190 has biased composition (pro residues). A C2H2-type 4 zinc finger spans residues Y198–H220. Positions S223–L232 are enriched in basic and acidic residues. Positions S223–A300 are disordered. Positions E233–G257 are enriched in acidic residues. 4 consecutive C2H2-type zinc fingers follow at residues F304 to H326, H331 to H353, Y359 to H381, and H387 to H408. Residues H408 to L449 form a disordered region. The span at G410–A433 shows a compositional bias: low complexity. The segment covering E434–L449 has biased composition (pro residues). 5 consecutive C2H2-type zinc fingers follow at residues L449–H472, H479–H501, F507–H529, Y535–H557, and Y580–H602. The tract at residues L608–Q627 is disordered. Pro residues predominate over residues P613–P626.

The protein belongs to the krueppel C2H2-type zinc-finger protein family.

Its subcellular location is the nucleus. Functionally, may be involved in transcriptional regulation. The sequence is that of Zinc finger protein 526 (ZNF526) from Bos taurus (Bovine).